An 873-amino-acid polypeptide reads, in one-letter code: Leucine--tRNA ligase (873 aa).

Positions 42–52 (PYPSGKLHMGH) match the 'HIGH' region motif. The 'KMSKS' region motif lies at 628–632 (KMAKS). Lysine 631 is a binding site for ATP.

It belongs to the class-I aminoacyl-tRNA synthetase family.

The protein localises to the cytoplasm. The catalysed reaction is tRNA(Leu) + L-leucine + ATP = L-leucyl-tRNA(Leu) + AMP + diphosphate. This is Leucine--tRNA ligase from Aromatoleum aromaticum (strain DSM 19018 / LMG 30748 / EbN1) (Azoarcus sp. (strain EbN1)).